Here is a 227-residue protein sequence, read N- to C-terminus: Cytochrome c oxidase subunit 2 (227 aa).

Over 1 to 14 (MAYPLQLGFQDATS) the chain is Mitochondrial intermembrane. The helical transmembrane segment at 15–45 (PIMEELLHFHDHTLMIVFLISSLVLYIISLM) threads the bilayer. Residues 46-59 (LTTKLTHTSTMDAQ) lie on the Mitochondrial matrix side of the membrane. Residues 60 to 87 (EVETIWTILPAIILILIALPSLRILYMM) traverse the membrane as a helical segment. At 88 to 227 (DEINNPSLTI…HFEKWSTSML (140 aa)) the chain is on the mitochondrial intermembrane side. 6 residues coordinate Cu cation: His-161, Cys-196, Glu-198, Cys-200, His-204, and Met-207. Glu-198 is a Mg(2+) binding site.

It belongs to the cytochrome c oxidase subunit 2 family. In terms of assembly, component of the cytochrome c oxidase (complex IV, CIV), a multisubunit enzyme composed of 14 subunits. The complex is composed of a catalytic core of 3 subunits MT-CO1, MT-CO2 and MT-CO3, encoded in the mitochondrial DNA, and 11 supernumerary subunits COX4I, COX5A, COX5B, COX6A, COX6B, COX6C, COX7A, COX7B, COX7C, COX8 and NDUFA4, which are encoded in the nuclear genome. The complex exists as a monomer or a dimer and forms supercomplexes (SCs) in the inner mitochondrial membrane with NADH-ubiquinone oxidoreductase (complex I, CI) and ubiquinol-cytochrome c oxidoreductase (cytochrome b-c1 complex, complex III, CIII), resulting in different assemblies (supercomplex SCI(1)III(2)IV(1) and megacomplex MCI(2)III(2)IV(2)). Found in a complex with TMEM177, COA6, COX18, COX20, SCO1 and SCO2. Interacts with TMEM177 in a COX20-dependent manner. Interacts with COX20. Interacts with COX16. The cofactor is Cu cation.

The protein resides in the mitochondrion inner membrane. The catalysed reaction is 4 Fe(II)-[cytochrome c] + O2 + 8 H(+)(in) = 4 Fe(III)-[cytochrome c] + 2 H2O + 4 H(+)(out). Component of the cytochrome c oxidase, the last enzyme in the mitochondrial electron transport chain which drives oxidative phosphorylation. The respiratory chain contains 3 multisubunit complexes succinate dehydrogenase (complex II, CII), ubiquinol-cytochrome c oxidoreductase (cytochrome b-c1 complex, complex III, CIII) and cytochrome c oxidase (complex IV, CIV), that cooperate to transfer electrons derived from NADH and succinate to molecular oxygen, creating an electrochemical gradient over the inner membrane that drives transmembrane transport and the ATP synthase. Cytochrome c oxidase is the component of the respiratory chain that catalyzes the reduction of oxygen to water. Electrons originating from reduced cytochrome c in the intermembrane space (IMS) are transferred via the dinuclear copper A center (CU(A)) of subunit 2 and heme A of subunit 1 to the active site in subunit 1, a binuclear center (BNC) formed by heme A3 and copper B (CU(B)). The BNC reduces molecular oxygen to 2 water molecules using 4 electrons from cytochrome c in the IMS and 4 protons from the mitochondrial matrix. The polypeptide is Cytochrome c oxidase subunit 2 (MT-CO2) (Rhinoceros unicornis (Greater Indian rhinoceros)).